The sequence spans 63 residues: MVCKCDCKNQNCSCNTGTKDCDCSDAKCCEQYCCPTASEKKCCKSGCAGGCKCANCECAQAAH.

Belongs to the metallothionein superfamily. Type 6 family.

Functionally, this protein binds cations of several transition elements. The sequence is that of Metallothionein-2 (mtl-2) from Caenorhabditis elegans.